Here is a 282-residue protein sequence, read N- to C-terminus: Small ribosomal subunit protein uS2 (282 aa).

A disordered region spans residues 260–282 (KRRRSKVYKEEEREVVTNEDESR). Residues 266–282 (VYKEEEREVVTNEDESR) are compositionally biased toward basic and acidic residues.

Belongs to the universal ribosomal protein uS2 family.

This Wolbachia pipientis wMel protein is Small ribosomal subunit protein uS2.